The sequence spans 579 residues: Arginine--tRNA ligase (579 aa).

Residues 127–137 (ANPTGPLHVGH) carry the 'HIGH' region motif.

Belongs to the class-I aminoacyl-tRNA synthetase family. As to quaternary structure, monomer.

Its subcellular location is the cytoplasm. The enzyme catalyses tRNA(Arg) + L-arginine + ATP = L-arginyl-tRNA(Arg) + AMP + diphosphate. The sequence is that of Arginine--tRNA ligase from Acidithiobacillus ferrooxidans (strain ATCC 23270 / DSM 14882 / CIP 104768 / NCIMB 8455) (Ferrobacillus ferrooxidans (strain ATCC 23270)).